The sequence spans 177 residues: Peptide methionine sulfoxide reductase MsrA (177 aa).

Cysteine 15 is a catalytic residue.

This sequence belongs to the MsrA Met sulfoxide reductase family.

The enzyme catalyses L-methionyl-[protein] + [thioredoxin]-disulfide + H2O = L-methionyl-(S)-S-oxide-[protein] + [thioredoxin]-dithiol. It carries out the reaction [thioredoxin]-disulfide + L-methionine + H2O = L-methionine (S)-S-oxide + [thioredoxin]-dithiol. In terms of biological role, has an important function as a repair enzyme for proteins that have been inactivated by oxidation. Catalyzes the reversible oxidation-reduction of methionine sulfoxide in proteins to methionine. In Mycobacterium leprae (strain Br4923), this protein is Peptide methionine sulfoxide reductase MsrA.